We begin with the raw amino-acid sequence, 749 residues long: MDAFKLLTRSTNLKTGRAAATSAAQTSRLPSTGKAANPQLFHNSEADRLLEEKKKHGQKRKRGHGADDAGSEDEDAADLDFFSSAKRASTGGAVAGKRHQEQASADKDGDSGSEDGSEMDEVQRRTVLNAHKIKVTDLRDLDQIQSTNAQTLQTEEPKKKKKKKAKAQQEEPKTLTKKEQKKARRLFPQPLVSFKELRTKYKISRRLAENIAEQGFTVPTEVQLGTLPLQLGDSSVQQASKPGETVEPDLLVVAPTGSGKTLSFLIPVINKIVRHHHEQPDERGIFAVVVAPTKELASQIVNEGRKLVQGTGVKITLMKKGMQVVERDGDGDSDEKDVLDEDSADSGSDSEDDEQTTDKKTKGKAPVTKSDILVTTPLLLVNALSANRTKPLAALPLVRNIVLDEADVLLDPLFREQTLDIWRSCTHPELRASLWSATMGSNVEDLAKSTIQERKDLSGTTKSYPLIRLVVGLKDSAIPNIQHKLVYAATEQGKLLGLRQLLHPTARTATDVHLRPPFLIFTQTIPRAVALHSELLYDIPPEAGGSSRIAVLHSELSDSQRSEIMKGFRKGEIWILVTTDLLARGVDFRGINGVVNYDIPNSAAVYVHRVGRTGRAGREGGVAVTYYTKEDIPYVKSIANIIDVSEKLRGAGGEKSVQKWLLDSLPDLSKKDKKELKKHGVKARQSNLKSIKDNKEFRQAKISTKSGYERRMENKKKGAIAASRNRKSQPQAPSTGADSGDDSWSGLED.

Disordered regions lie at residues 1 to 121 (MDAF…EMDE) and 148 to 182 (NAQTLQTEEPKKKKKKKAKAQQEEPKTLTKKEQKK). Over residues 17–28 (RAAATSAAQTSR) the composition is skewed to low complexity. Residues 44–54 (SEADRLLEEKK) are compositionally biased toward basic and acidic residues. Positions 69–78 (AGSEDEDAAD) are enriched in acidic residues. Residues 98 to 110 (RHQEQASADKDGD) are compositionally biased toward basic and acidic residues. A compositionally biased stretch (acidic residues) spans 111–120 (SGSEDGSEMD). Positions 167 to 178 (AQQEEPKTLTKK) are enriched in basic and acidic residues. Positions 192 to 224 (VSFKELRTKYKISRRLAENIAEQGFTVPTEVQL) match the Q motif motif. One can recognise a Helicase ATP-binding domain in the interval 241 to 457 (KPGETVEPDL…KSTIQERKDL (217 aa)). 254–261 (APTGSGKT) is a binding site for ATP. The interval 324–366 (VVERDGDGDSDEKDVLDEDSADSGSDSEDDEQTTDKKTKGKAP) is disordered. Residues 331-355 (GDSDEKDVLDEDSADSGSDSEDDEQ) show a composition bias toward acidic residues. The DEAD box signature appears at 404 to 407 (DEAD). In terms of domain architecture, Helicase C-terminal spans 497 to 665 (GLRQLLHPTA…SVQKWLLDSL (169 aa)). Positions 672-749 (DKKELKKHGV…GDDSWSGLED (78 aa)) are disordered. 2 stretches are compositionally biased toward basic and acidic residues: residues 690 to 699 (SIKDNKEFRQ) and 707 to 716 (GYERRMENKK). Positions 728–737 (SQPQAPSTGA) are enriched in polar residues.

It belongs to the DEAD box helicase family. DDX52/ROK1 subfamily. Interacts with the U3 snoRNA and is associated with the 90S and 40S pre-ribosomes.

The protein localises to the nucleus. The protein resides in the nucleolus. The enzyme catalyses ATP + H2O = ADP + phosphate + H(+). ATP-dependent RNA helicase involved in 40S ribosomal subunit biogenesis. Required for the processing and cleavage of 35S pre-rRNA at sites A0, A1, and A2, leading to mature 18S rRNA. This is ATP-dependent RNA helicase rok1 (rok1) from Aspergillus terreus (strain NIH 2624 / FGSC A1156).